The following is a 447-amino-acid chain: MGKEKVHINIVVIGHVDSGKSTTTVHVIYKLGGIDKRVIERFEKEADEMNKRSFKYAWLLDKLKAERERGITIDIALLKFETTKYYSTVMDAPGHRDFIKNMITGTSQADCAVLIIDSTTGGFEAGISKDGQTREHALLAFTLGVKQMICCCNKMDATTPKYSKGRYEEIVKEVSSYLKEVGYNPDKIPFVPISGFEGDNMIERSTNLDWYKGPTLLDALDNINEPKRPSDKPLRLPLQDVYKIGGIGTVPVGRVETGVVKPGMLVTFAPTGLTTEVKSVEMHHEALTEALPGDNVRFNVKNVAVKDLKHGLVASNSKDDPAKDAANFTSQVIIMNHPGQIGNGYAPVLDCHTSHIAVKFAELITKIDRRSGKEIEKEPKFLKNGDAGMVKMIPTKPMVVETFAEYPPLGRFAVRDMRQTVAVGVIKSVEKKDPTGAKVTKAAAKKK.

Residues 5-230 form the tr-type G domain; the sequence is KVHINIVVIG…DNINEPKRPS (226 aa). Positions 14–21 are G1; sequence GHVDSGKS. Residue 14–21 coordinates GTP; that stretch reads GHVDSGKS. Lys-55 is modified (N6,N6-dimethyllysine). The interval 70-74 is G2; the sequence is GITID. Residue Lys-79 is modified to N6,N6,N6-trimethyllysine. Residues 91–94 are G3; it reads DAPG. GTP contacts are provided by residues 91–95 and 153–156; these read DAPGH and NKMD. Residues 153–156 are G4; the sequence is NKMD. Lys-187 is subject to N6,N6,N6-trimethyllysine. The interval 194–196 is G5; that stretch reads SGF. At Lys-261 the chain carries N6-methyllysine. 5-glutamyl glycerylphosphorylethanolamine is present on Glu-289. Lys-306 is subject to N6,N6,N6-trimethyllysine. Glu-362 bears the 5-glutamyl glycerylphosphorylethanolamine mark. Residue Lys-396 is modified to N6,N6,N6-trimethyllysine.

This sequence belongs to the TRAFAC class translation factor GTPase superfamily. Classic translation factor GTPase family. EF-Tu/EF-1A subfamily.

It is found in the cytoplasm. Functionally, this protein promotes the GTP-dependent binding of aminoacyl-tRNA to the A-site of ribosomes during protein biosynthesis. This Pisum sativum (Garden pea) protein is Elongation factor 1-alpha.